Reading from the N-terminus, the 106-residue chain is NADH dehydrogenase [ubiquinone] 1 alpha subcomplex subunit 8-B (106 aa).

An N-acetylserine modification is found at Ser2. CHCH domains lie at 26-67 (GMRC…LKDL) and 68-106 (HQKC…CPLK). 3 short sequence motifs (cx9C motif) span residues 29-39 (CMPENVAFLKC), 49-59 (CLDKGRDVTRC), and 71-81 (CQKEMDDYVGC). 4 disulfide bridges follow: Cys29–Cys59, Cys39–Cys49, Cys71–Cys103, and Cys81–Cys92. The short motif at 92-103 (CRKEQEAFEKVC) is the Cx10C motif element.

This sequence belongs to the complex I NDUFA8 subunit family. As to quaternary structure, complex I is composed of at least 49 different subunits.

Its subcellular location is the mitochondrion. It localises to the mitochondrion intermembrane space. In terms of biological role, accessory subunit of the mitochondrial membrane respiratory chain NADH dehydrogenase (Complex I), that is believed not to be involved in catalysis. Complex I functions in the transfer of electrons from NADH to the respiratory chain. The immediate electron acceptor for the enzyme is believed to be ubiquinone. This is NADH dehydrogenase [ubiquinone] 1 alpha subcomplex subunit 8-B from Arabidopsis thaliana (Mouse-ear cress).